Reading from the N-terminus, the 147-residue chain is Hemoglobin subunit epsilon (147 aa).

The region spanning 3-147 (HFTAEEKATI…VATALAHKYH (145 aa)) is the Globin domain. Residues serine 14 and serine 51 each carry the phosphoserine modification. Residues histidine 64 and histidine 93 each coordinate heme b.

It belongs to the globin family. Heterotetramer of two alpha chains and two epsilon chains in early embryonic hemoglobin Gower-2; two zeta chains and two epsilon chains in early embryonic hemoglobin Gower-1. Red blood cells.

The epsilon chain is a beta-type chain of early mammalian embryonic hemoglobin. In Daubentonia madagascariensis (Aye-aye), this protein is Hemoglobin subunit epsilon (HBE1).